Reading from the N-terminus, the 158-residue chain is Transcription antitermination protein NusB (158 aa).

The protein belongs to the NusB family.

Its function is as follows. Involved in transcription antitermination. Required for transcription of ribosomal RNA (rRNA) genes. Binds specifically to the boxA antiterminator sequence of the ribosomal RNA (rrn) operons. The chain is Transcription antitermination protein NusB from Bartonella henselae (strain ATCC 49882 / DSM 28221 / CCUG 30454 / Houston 1) (Rochalimaea henselae).